The chain runs to 352 residues: C-C chemokine receptor type 5 (352 aa).

Over 1-30 (MDYQVSSPTYDIDYYTSEPCQKVNVKQIAA) the chain is Extracellular. Position 3 is a sulfotyrosine (Y3). O-linked (GalNAc...) serine glycosylation is found at S6 and S7. Sulfotyrosine is present on residues Y10, Y14, and Y15. Disulfide bonds link C20-C269 and C101-C178. The chain crosses the membrane as a helical span at residues 31–58 (RLLPPLYSLVFIFGFVGNILVVLILINC). Residues 59-68 (KRLKSMTDIY) are Cytoplasmic-facing. Residues 69–89 (LLNLAISDLFFLLTVPFWAHY) form a helical membrane-spanning segment. The Extracellular segment spans residues 90–102 (AAAQWDFGNTMCQ). Residues 103–124 (LLTGLYFIGFFSGIFFIILLTI) form a helical membrane-spanning segment. At 125-141 (DRYLAIVHAVFALKART) the chain is on the cytoplasmic side. The chain crosses the membrane as a helical span at residues 142 to 166 (VTFGVVTSVITWVVAVFASLPGIIF). The Extracellular portion of the chain corresponds to 167–198 (TRSQREGVHYTCSSHFPYSQYQFWKNFQTLKI). The helical transmembrane segment at 199 to 218 (VILGLVLPLLVMVICYSGIL) threads the bilayer. Residues 219–235 (KTLLRCRNEKKRHRAVR) lie on the Cytoplasmic side of the membrane. The chain crosses the membrane as a helical span at residues 236-260 (LIFTIMIVYFLFWAPYNIVLLLNTF). The Extracellular segment spans residues 261–277 (QEFFGLNNCSSSNRLDQ). A helical membrane pass occupies residues 278-301 (AMQVTETLGMTHCCINPIIYAFVG). Topologically, residues 302–352 (EKFRNYLLVFFQKHIAKRFCKCCSIFQQEAPERASSVYTRSTGEQETSVGL) are cytoplasmic. S-palmitoyl cysteine attachment occurs at residues C321, C323, and C324. S336, S337, S342, and S349 each carry phosphoserine; by BARK1.

It belongs to the G-protein coupled receptor 1 family. In terms of assembly, interacts with PRAF2. Efficient ligand binding to CCL3/MIP-1alpha and CCL4/MIP-1beta requires sulfation, O-glycosylation and sialic acid modifications. Glycosylation on Ser-6 is required for efficient binding of CCL4. Interacts with GRK2. Interacts with ARRB1 and ARRB2. Interacts with CNIH4. Interacts with S100A4; this interaction stimulates T-lymphocyte chemotaxis. Post-translationally, sulfated on at least 2 of the N-terminal tyrosines. Sulfation is required for efficient binding of the chemokines, CCL3 and CCL4. In terms of processing, palmitoylation in the C-terminal is important for cell surface expression. Phosphorylation on serine residues in the C-terminal is stimulated by binding CC chemokines especially by APO-RANTES. Post-translationally, O-glycosylated, but not N-glycosylated. Ser-6 appears to be the major site even if Ser-7 may be also O-glycosylated. Also sialylated glycans present which contribute to chemokine binding. Thr-16 and Ser-17 may also be glycosylated and, if so, with small moieties such as a T-antigen.

It localises to the cell membrane. Receptor for a number of inflammatory CC-chemokines including CCL3/MIP-1-alpha, CCL4/MIP-1-beta and RANTES and subsequently transduces a signal by increasing the intracellular calcium ion level. May play a role in the control of granulocytic lineage proliferation or differentiation. Participates in T-lymphocyte migration to the infection site by acting as a chemotactic receptor. In Rhinopithecus avunculus (Tonkin snub-nosed monkey), this protein is C-C chemokine receptor type 5 (CCR5).